We begin with the raw amino-acid sequence, 1007 residues long: uncharacterized protein (1007 aa).

Positions 1–51 (MTTPISNSPSSIPTVTVSTTTASSGSLGTSTVSSTTTSTSVAQTATTTSSA) are cleaved as a signal peptide. Positions 1–96 (MTTPISNSPS…SATANKTSSA (96 aa)) are enriched in low complexity. Disordered stretches follow at residues 1–186 (MTTP…GNPI), 200–224 (TYTT…MSLP), 387–533 (NWGS…GPDI), 543–562 (TVYP…ANQN), 578–645 (ETII…GPDI), 655–674 (TVYP…ANQN), and 712–757 (DLED…GPDI). The segment covering 118–163 (DGEVSSNYDDVDTPTNSSDSTVDSDYQDVETQYKTISNNGENTYET) has biased composition (polar residues). Residues 167–176 (HGEKNTHVQE) are compositionally biased toward basic and acidic residues. Composition is skewed to polar residues over residues 177 to 186 (SHASGTGNPI) and 200 to 210 (TYTTSPRNENI). The span at 423–442 (VINVNVNVGGTNVNIGDTNV) shows a compositional bias: low complexity. Residues 443–453 (SKGSGTPTSSQ) show a composition bias toward polar residues. The span at 469-491 (IDTNNQTNGDINTNDNSNNVDGS) shows a compositional bias: low complexity. Over residues 507–523 (DTESTNGNDSGKTTSTE) the composition is skewed to polar residues. Residues 597–618 (ADADVEDTSDTDSGIGDDDGVS) are compositionally biased toward acidic residues. The span at 619-635 (DTESTNGNNSGKTTSTE) shows a compositional bias: low complexity. The span at 712 to 730 (DLEDVSDADSGFGDDDGIS) shows a compositional bias: acidic residues. Residues 732–743 (TESTNGNDSGKN) show a composition bias toward polar residues.

This sequence belongs to the chlamydial CPn_0572/CT_456/TC_0741 family.

This is an uncharacterized protein from Chlamydia muridarum (strain MoPn / Nigg).